A 302-amino-acid polypeptide reads, in one-letter code: Glycine--tRNA ligase alpha subunit (302 aa).

Belongs to the class-II aminoacyl-tRNA synthetase family. In terms of assembly, tetramer of two alpha and two beta subunits.

It is found in the cytoplasm. It catalyses the reaction tRNA(Gly) + glycine + ATP = glycyl-tRNA(Gly) + AMP + diphosphate. The protein is Glycine--tRNA ligase alpha subunit of Haemophilus ducreyi (strain 35000HP / ATCC 700724).